The chain runs to 870 residues: MKEEKNITPMLAQYHKIKDQYPDALVLYRLGDFYEMFYEDAHTGARELNIVLTKKKVGKDRYIPMCGIPFHSADSYITRLVSKGYKVAICEQLEDASKAKGIVKRDVIRVLTPGTYFENEKLKSALLGIYQERGRFYIAYLDLSTGEFTGGSLNRDELISFIGKFQPKEIVVQEGYDFSDLRSQFKSIFFSQLPEDYFSEDTHSEFLGFFKTGHISAFGFDTEEQNVIYPLSAVWKYAKVTQKSFLPFISTPKPYREDSYVRLDYSAQKHLEIVSPNEGNIPLLRVMDRTLTGMGRRKLRFFLLHPLKNSKEIIKRQNAVTELVENTELREKIRDILDQIFDIERLISKISSNTSTPRDLVGLRESLKKVSKLKEISKEIKSDLLKESFERIEDYSWLIEKLDRYLEDDPPIHLKEGGLIKKGVDKDLDELKEIKEKGNEWLKSYQEKLRKETGIQSLKIGFNKVMGYYIEVTKPNLKLVPDHFRRRQTLSNAERFITDELQSFEEKILSADEKIKALEYEIFMRIREEVAFLSDRIGKTAQQVGMIDAIQSLAQIAVEKGWTKPDIHDGYEIEIKEGYHPVIKEFMPDFVPNNLKMNRNSYFHIITGPNMAGKSTFIRQSAIIILLAQTGSYIPAKKGKIGVVDAIFTRIGSGDALAKGLSTFMVEMLEMANIVNNATERSFIVLDEVGRGTSTYDGLSIGWAISEYLAEKVKVKTLFATHYHELTQLEREIKGVKNFHMDIFEDGENIKFLYRVKEGFSNKSYGVHVAKLAGIKEQIIKRAYEILYYFEEQRDKKLEEDIYSLKQKENSYLNEINELPLFKEIEDIEKDEYRQILEEIESIDIGSITPVEALVFLNDLKKKIKRLKES.

608–615 (GPNMAGKS) contacts ATP.

The protein belongs to the DNA mismatch repair MutS family.

Its function is as follows. This protein is involved in the repair of mismatches in DNA. It is possible that it carries out the mismatch recognition step. This protein has a weak ATPase activity. The polypeptide is DNA mismatch repair protein MutS (Persephonella marina (strain DSM 14350 / EX-H1)).